The following is a 228-amino-acid chain: Octanoyltransferase (228 aa).

A BPL/LPL catalytic domain is found at 30-214; sequence KKIGDTLLLL…YFGKVFGKSL (185 aa). Residues 75–82, 144–146, and 157–159 each bind substrate; these read RGGDVTYH, AIG, and GFA. The active-site Acyl-thioester intermediate is the C175.

This sequence belongs to the LipB family.

It localises to the cytoplasm. It catalyses the reaction octanoyl-[ACP] + L-lysyl-[protein] = N(6)-octanoyl-L-lysyl-[protein] + holo-[ACP] + H(+). The protein operates within protein modification; protein lipoylation via endogenous pathway; protein N(6)-(lipoyl)lysine from octanoyl-[acyl-carrier-protein]: step 1/2. Catalyzes the transfer of endogenously produced octanoic acid from octanoyl-acyl-carrier-protein onto the lipoyl domains of lipoate-dependent enzymes. Lipoyl-ACP can also act as a substrate although octanoyl-ACP is likely to be the physiological substrate. The polypeptide is Octanoyltransferase (Caldicellulosiruptor bescii (strain ATCC BAA-1888 / DSM 6725 / KCTC 15123 / Z-1320) (Anaerocellum thermophilum)).